The chain runs to 871 residues: Alanine--tRNA ligase (871 aa).

Zn(2+)-binding residues include histidine 590, histidine 594, cysteine 694, and histidine 698.

The protein belongs to the class-II aminoacyl-tRNA synthetase family. Requires Zn(2+) as cofactor.

Its subcellular location is the cytoplasm. It carries out the reaction tRNA(Ala) + L-alanine + ATP = L-alanyl-tRNA(Ala) + AMP + diphosphate. Functionally, catalyzes the attachment of alanine to tRNA(Ala) in a two-step reaction: alanine is first activated by ATP to form Ala-AMP and then transferred to the acceptor end of tRNA(Ala). Also edits incorrectly charged Ser-tRNA(Ala) and Gly-tRNA(Ala) via its editing domain. The sequence is that of Alanine--tRNA ligase from Thermoplasma acidophilum (strain ATCC 25905 / DSM 1728 / JCM 9062 / NBRC 15155 / AMRC-C165).